The following is a 330-amino-acid chain: Aspartate--ammonia ligase (330 aa).

This sequence belongs to the class-II aminoacyl-tRNA synthetase family. AsnA subfamily.

It is found in the cytoplasm. The catalysed reaction is L-aspartate + NH4(+) + ATP = L-asparagine + AMP + diphosphate + H(+). It functions in the pathway amino-acid biosynthesis; L-asparagine biosynthesis; L-asparagine from L-aspartate (ammonia route): step 1/1. The protein is Aspartate--ammonia ligase of Escherichia coli O45:K1 (strain S88 / ExPEC).